Consider the following 489-residue polypeptide: Protein LMBR1L (489 aa).

Residues 1–21 are Extracellular-facing; that stretch reads MEAPDCEVLSVREQLFHERIR. Positions 1–59 are interaction with LGB; it reads MEAPDCEVLSVREQLFHERIRECIISTLLFATLYILCHIFLTRFKKPAEFTTVDDADAT. The segment at 1-76 is LCN1-binding; it reads MEAPDCEVLS…LCTFTLAIAL (76 aa). Residues 22–42 form a helical membrane-spanning segment; it reads ECIISTLLFATLYILCHIFLT. The Cytoplasmic segment spans residues 43 to 66; sequence RFKKPAEFTTVDDADATVNKIALE. The chain crosses the membrane as a helical span at residues 67 to 87; the sequence is LCTFTLAIALGAVLLLPFSII. At 88 to 114 the chain is on the extracellular side; sequence SNEVLLSLPRNYYIQWLNGSLIHGLWN. Residues 115 to 135 traverse the membrane as a helical segment; it reads LVFLFSNLSLIFLMPFAYFFT. At 136-154 the chain is on the cytoplasmic side; sequence ESEGFAGSRKGVLGRVYET. A helical membrane pass occupies residues 155–175; the sequence is VVMLMLLTLLVLGMVWVASAI. Residues 176-196 lie on the Extracellular side of the membrane; the sequence is VDNNKASRESLYDFWEYYLPY. Residues 197–217 traverse the membrane as a helical segment; it reads LYSCISFLGVLLLLVCTPLGL. Topologically, residues 218-305 are cytoplasmic; it reads ARMFSVTGKL…NLGYPLAMLC (88 aa). Residues 306 to 326 traverse the membrane as a helical segment; that stretch reads LLVLTGLSVLIVAIHILELLI. The Extracellular segment spans residues 327 to 350; that stretch reads DEAAMPRGMQGASLGQVSFSKLGS. The helical transmembrane segment at 351 to 371 threads the bilayer; sequence FGAVVQVVLIFYLMVSSVVGF. Residues 372 to 388 lie on the Cytoplasmic side of the membrane; it reads YSSPLFRSLRPRWHDTA. A helical transmembrane segment spans residues 389–409; that stretch reads MTQIIGNCVCLLVLSSALPVF. At 410–431 the chain is on the extracellular side; that stretch reads SRTLGLTRFDLLGDFGRFNWLG. A helical transmembrane segment spans residues 432–452; that stretch reads NFYIVFLYNAAFAGLTTLCLV. Over 453-489 the chain is Cytoplasmic; the sequence is KTFTAAVRAELIRAFGLDRLPLPVSGFPRASRKTQHQ.

It belongs to the LIMR family. As to quaternary structure, dimer. Can also form higher oligomers. Interacts with LCN1; this interaction mediates the endocytosis of LCN1. Interacts with UBAC2, FAF2, VCP, AMFR, ZNRF3, CTNNB1, LRP6, GSK3A, GSK3B, FZD6, DVL2 and RNF43. Interaction with LGB and SCGB1A1 is controversial.

The protein resides in the cell membrane. It is found in the endoplasmic reticulum membrane. In terms of biological role, plays an essential role in lymphocyte development by negatively regulating the canonical Wnt signaling pathway. In association with UBAC2 and E3 ubiquitin-protein ligase AMFR, promotes the ubiquitin-mediated degradation of CTNNB1 and Wnt receptors FZD6 and LRP6. LMBR1L stabilizes the beta-catenin destruction complex that is required for regulating CTNNB1 levels. Acts as a LCN1 receptor and can mediate its endocytosis. This chain is Protein LMBR1L (LMBR1L), found in Macaca fascicularis (Crab-eating macaque).